A 91-amino-acid chain; its full sequence is MYVVVAYDITEDEVRNKVADALKAYGLERIQRSVFVGRINPALLKDLVERLKRITKGANADITIFKVDRRAIDTAIRIGPPPPARKNVDLY.

D8 is a binding site for Mg(2+).

The protein belongs to the CRISPR-associated endoribonuclease Cas2 protein family. Homodimer, forms a heterotetramer with a Cas1 homodimer. Mg(2+) is required as a cofactor.

Functionally, CRISPR (clustered regularly interspaced short palindromic repeat), is an adaptive immune system that provides protection against mobile genetic elements (viruses, transposable elements and conjugative plasmids). CRISPR clusters contain sequences complementary to antecedent mobile elements and target invading nucleic acids. CRISPR clusters are transcribed and processed into CRISPR RNA (crRNA). Functions as a ssRNA-specific endoribonuclease. Involved in the integration of spacer DNA into the CRISPR cassette. The sequence is that of CRISPR-associated endoribonuclease Cas2 2 from Pyrobaculum aerophilum (strain ATCC 51768 / DSM 7523 / JCM 9630 / CIP 104966 / NBRC 100827 / IM2).